A 511-amino-acid polypeptide reads, in one-letter code: 2'-acyl-2-O-sulfo-trehalose (hydroxy)phthioceranyltransferase PapA1 (511 aa).

It belongs to the PapA acyltransferase family.

It catalyses the reaction a (hydroxy)phthioceranyl-[(hydroxy)phthioceranic acid synthase] + 2'-palmitoyl/stearoyl-2-O-sulfo-alpha,alpha-trehalose = a 3'-(hydroxy)phthioceranyl-2'-palmitoyl/stearoyl-2-O-sulfo-alpha,alpha-trehalose + holo-[(hydroxy)phthioceranic acid synthase].. Functionally, catalyzes the acylation of trehalose-2-sulfate-2'-palmitate (SL659) by adding the (hydroxy)phthioceranoyl group at the 3'-position to yield the diacylated intermediate 2-palmitoyl-3-(C43)-phthioceranyl-alpha, alpha'-D-trehalose-2'-sulfate (SL1278). This chain is 2'-acyl-2-O-sulfo-trehalose (hydroxy)phthioceranyltransferase PapA1 (papA1), found in Mycobacterium bovis (strain BCG / Pasteur 1173P2).